A 315-amino-acid chain; its full sequence is Probable cytochrome c oxidase subunit 2 (315 aa).

Transmembrane regions (helical) follow at residues isoleucine 54–tryptophan 74, leucine 96–isoleucine 116, and valine 133–proline 153. The Cu cation site is built by histidine 235, cysteine 270, cysteine 274, and histidine 278.

It belongs to the cytochrome c oxidase subunit 2 family. Requires Cu cation as cofactor. Heme is required as a cofactor.

The protein localises to the cell membrane. The catalysed reaction is 4 Fe(II)-[cytochrome c] + O2 + 8 H(+)(in) = 4 Fe(III)-[cytochrome c] + 2 H2O + 4 H(+)(out). Subunits I and II form the functional core of the enzyme complex. Electrons originating in cytochrome c are transferred via heme a and Cu(A) to the binuclear center formed by heme a3 and Cu(B). This is Probable cytochrome c oxidase subunit 2 (ctaC) from Rickettsia conorii (strain ATCC VR-613 / Malish 7).